A 357-amino-acid polypeptide reads, in one-letter code: DNA replication and repair protein RecF (357 aa).

30–37 is an ATP binding site; sequence GANGSGKT.

This sequence belongs to the RecF family.

The protein localises to the cytoplasm. Its function is as follows. The RecF protein is involved in DNA metabolism; it is required for DNA replication and normal SOS inducibility. RecF binds preferentially to single-stranded, linear DNA. It also seems to bind ATP. The chain is DNA replication and repair protein RecF from Salmonella arizonae (strain ATCC BAA-731 / CDC346-86 / RSK2980).